The sequence spans 552 residues: Gamma-aminobutyric acid receptor subunit alpha-4 (552 aa).

The signal sequence occupies residues 1–35 (MVSVQKVPAIVLCSGVSLALLHVLCLATCLNESPG). Residues 36-259 (QNSKDEKLCP…FHLRRKMGYF (224 aa)) lie on the Extracellular side of the membrane. Asn47 carries an N-linked (GlcNAc...) asparagine glycan. Arg100 provides a ligand contact to 4-aminobutanoate. 2 N-linked (GlcNAc...) asparagine glycosylation sites follow: Asn144 and Asn157. Thr163 provides a ligand contact to 4-aminobutanoate. The cysteines at positions 172 and 186 are disulfide-linked. A helical transmembrane segment spans residues 260 to 280 (MIQTYIPCIMTVILSQVSFWI). The Cytoplasmic segment spans residues 281–284 (NKES). Residues 285–305 (VPARTVFGITTVLTMTTLSIS) form a helical membrane-spanning segment. Residues 306–318 (ARHSLPKVSYATA) are Extracellular-facing. The chain crosses the membrane as a helical span at residues 319–341 (MDWFIAVCFAFVFSALIEFAAVN). Residues 342–515 (YFTNIQMQKA…PPPSGSGTSK (174 aa)) lie on the Cytoplasmic side of the membrane. Disordered stretches follow at residues 353-436 (KKIS…NPFS), 448-470 (ARGL…PLRS), and 486-513 (TTVN…GSGT). Residues 403–423 (RTEVGNHSSKTTAAQESSETT) show a composition bias toward polar residues. Low complexity-rich tracts occupy residues 448 to 458 (ARGLSSAASPS) and 486 to 499 (TTVN…NVSA). The segment covering 500–509 (TPPPSAPPPS) has biased composition (pro residues). The helical transmembrane segment at 516-538 (IDKYARILFPVTFGAFNMVYWVV) threads the bilayer. Residues 539-552 (YLSKDTMEKSESLM) lie on the Extracellular side of the membrane.

It belongs to the ligand-gated ion channel (TC 1.A.9) family. Gamma-aminobutyric acid receptor (TC 1.A.9.5) subfamily. GABRA4 sub-subfamily. As to quaternary structure, heteropentamer, formed by a combination of alpha (GABRA1-6), beta (GABRB1-3), gamma (GABRG1-3), delta (GABRD), epsilon (GABRE), rho (GABRR1-3), pi (GABRP) and theta (GABRQ) chains, each subunit exhibiting distinct physiological and pharmacological properties. In terms of tissue distribution, expressed in the brain.

The protein resides in the cell membrane. Its subcellular location is the postsynaptic cell membrane. Potentiated by histamine. Alpha subunit of the heteropentameric ligand-gated chloride channel gated by gamma-aminobutyric acid (GABA), a major inhibitory neurotransmitter in the brain. GABA-gated chloride channels, also named GABA(A) receptors (GABAAR), consist of five subunits arranged around a central pore and contain GABA active binding site(s) located at the alpha and beta subunit interface(s). Alpha-4/GABRA4 subunit often assembles with delta or gamma-2 subunits, in combination with beta subunits. When activated by GABA, GABAARs selectively allow the flow of chloride anions across the cell membrane down their electrochemical gradient. GABAARs containing alpha-4 are predominantly extrasynaptic, contributing to tonic inhibition in dentate granule cells and thalamic relay neurons. Extrasynaptic alpha-4-containing GABAARs control levels of excitability and network activity. GABAAR containing alpha-4-beta-3-delta subunits can simultaneously bind GABA and histamine where histamine binds at the interface of two neighboring beta subunits, which may be involved in the regulation of sleep and wakefulness. This Rattus norvegicus (Rat) protein is Gamma-aminobutyric acid receptor subunit alpha-4.